A 1004-amino-acid chain; its full sequence is 2-oxoglutarate dehydrogenase E1 component (1004 aa).

It belongs to the alpha-ketoglutarate dehydrogenase family. As to quaternary structure, homodimer. Part of the 2-oxoglutarate dehydrogenase (OGDH) complex composed of E1 (2-oxoglutarate dehydrogenase), E2 (dihydrolipoamide succinyltransferase) and E3 (dihydrolipoamide dehydrogenase); the complex contains multiple copies of the three enzymatic components (E1, E2 and E3). Requires thiamine diphosphate as cofactor.

The catalysed reaction is N(6)-[(R)-lipoyl]-L-lysyl-[protein] + 2-oxoglutarate + H(+) = N(6)-[(R)-S(8)-succinyldihydrolipoyl]-L-lysyl-[protein] + CO2. Functionally, E1 component of the 2-oxoglutarate dehydrogenase (OGDH) complex which catalyzes the decarboxylation of 2-oxoglutarate, the first step in the conversion of 2-oxoglutarate to succinyl-CoA and CO(2). The sequence is that of 2-oxoglutarate dehydrogenase E1 component from Brucella melitensis biotype 2 (strain ATCC 23457).